A 201-amino-acid chain; its full sequence is MSRYRGPRFKKIRRLGALPGLTSKRPRAGSDLRNQSRSGKRSQYRIRLEEKQKLRFHYGLTERQLLNYVRIAGKAKGATGRVLLQLLEMRLDNILFRLGMASTIPGARQLVNHRHILVNGRIVDIPSYRCKPRDIITAGNEQKSRALIQNVFDSSSHEELPKHLTLHPFQFKGLVNQIIDSNWVGLKINELLVVEYYSRQT.

The tract at residues 20–43 (GLTSKRPRAGSDLRNQSRSGKRSQ) is disordered. The S4 RNA-binding domain occupies 89–149 (MRLDNILFRL…NEQKSRALIQ (61 aa)).

This sequence belongs to the universal ribosomal protein uS4 family. Part of the 30S ribosomal subunit. Contacts protein S5. The interaction surface between S4 and S5 is involved in control of translational fidelity.

The protein localises to the plastid. It is found in the chloroplast. In terms of biological role, one of the primary rRNA binding proteins, it binds directly to 16S rRNA where it nucleates assembly of the body of the 30S subunit. With S5 and S12 plays an important role in translational accuracy. The chain is Small ribosomal subunit protein uS4c (rps4) from Vitis vinifera (Grape).